A 547-amino-acid polypeptide reads, in one-letter code: Chaperonin GroEL 1 (547 aa).

Residues Thr-30–Pro-33, Lys-51, Asp-87–Thr-91, Gly-415, and Asp-496 each bind ATP.

The protein belongs to the chaperonin (HSP60) family. As to quaternary structure, forms a cylinder of 14 subunits composed of two heptameric rings stacked back-to-back. Interacts with the co-chaperonin GroES.

The protein resides in the cytoplasm. It carries out the reaction ATP + H2O + a folded polypeptide = ADP + phosphate + an unfolded polypeptide.. Functionally, together with its co-chaperonin GroES, plays an essential role in assisting protein folding. The GroEL-GroES system forms a nano-cage that allows encapsulation of the non-native substrate proteins and provides a physical environment optimized to promote and accelerate protein folding. The chain is Chaperonin GroEL 1 from Rhodopseudomonas palustris (strain BisB18).